The primary structure comprises 266 residues: RNA-binding protein 7 (266 aa).

Gly2 is subject to N-acetylglycine. Residues 10–87 (RTLFVGNLET…RPIKIQFRSG (78 aa)) form the RRM domain. ZCCHC8 binding stretches follow at residues 25 to 35 (LLFELFHQAGP) and 59 to 76 (HEVSVPYAMNLLNGIKLY). The span at 90 to 115 (HAPQDVSLSYPQHHVGNSSPTSTSPS) shows a compositional bias: polar residues. The tract at residues 90-118 (HAPQDVSLSYPQHHVGNSSPTSTSPSRYE) is disordered. Phosphoserine occurs at positions 136 and 137. Arg152 carries the post-translational modification Omega-N-methylarginine. Residues 162–266 (SSPLDQSGFS…RDGKWRSSRH (105 aa)) are disordered. The segment covering 173–188 (SVQSHSHSFNQSSSSQ) has biased composition (low complexity). Ser204 bears the Phosphoserine mark. Over residues 209–266 (ADRHYSREQRYTDHGSDHHYRGKRDDFFYEDRNHDDWSHDYDNRRDSSRDGKWRSSRH) the composition is skewed to basic and acidic residues.

As to quaternary structure, component of the nuclear exosome targeting (NEXT) complex composed of MTREX, ZCCHC8, and RBM7 that directs a subset of non-coding short-lived RNAs for exosomal degradation. Interacts with ZCCHC8 and SF3B2/SAP145. Binds to MTREX through ZCCHC8. Interacts with YWHAE and YWHAZ; these interactions are stress-dependent and RBM7 phosphorylation dependent; release RNA from the NEXT complex and may affect RNA targeting to the nuclear RNA exosomome for degradation. Interacts with MEPCE and LARP7, the core subunits of 7SK snRNP; upon genotoxic stress this interaction is enhanced, triggering the release of inactive P-TEFb complex from the core and P-TEFb complex activation. Phosphorylated at Ser-136 by MAPK14/p38-alpha-activated MAPKAPK2/MK2; this phosphorylation is stress-dependent; this phosphorylation decreases its RNA-binding capacity therefore affecting RNA nuclear exosome-mediated degradation. This phosphorylation mediates YWHAE and YWHAZ interactions. As to expression, ubiquitous.

The protein localises to the nucleus. The protein resides in the nucleoplasm. Functionally, RNA-binding subunit of the trimeric nuclear exosome targeting (NEXT) complex, a complex that functions as an RNA exosome cofactor that directs a subset of non-coding short-lived RNAs for exosomal degradation. NEXT is involved in surveillance and turnover of aberrant transcripts and non-coding RNAs. Binds preferentially polyuridine sequences and associates with newly synthesized RNAs, including pre-mRNAs and short-lived exosome substrates such as promoter upstream transcripts (PROMPTs), enhancer RNAs (eRNAs), and 3'-extended products from small nuclear RNAs (snRNAs). Participates in several biological processes including DNA damage response (DDR) and stress response. During stress response, activation of the p38MAPK-MK2 pathway decreases RBM7-RNA-binding and subsequently the RNA exosome degradation activities, thereby modulating the turnover of non-coding transcriptome. Participates in DNA damage response (DDR), through its interaction with MEPCE and LARP7, the core subunits of 7SK snRNP complex, that release the positive transcription elongation factor b (P-TEFb) complex from the 7SK snRNP. In turn, activation of P-TEFb complex induces the transcription of P-TEFb-dependent DDR genes to promote cell viability. The sequence is that of RNA-binding protein 7 from Homo sapiens (Human).